We begin with the raw amino-acid sequence, 790 residues long: Exocyst complex component SEC15A (790 aa).

Positions 49 to 70 form a coiled coil; sequence LVHQLKNVARKKEAEIEDLCKT.

The protein belongs to the SEC15 family. The exocyst complex is composed of SEC3, SEC5, SEC6, SEC8, SEC10, EXO70A1 and EXO84B.

It localises to the cytoplasm. The protein resides in the cytosol. Component of the exocyst complex involved in the docking of exocytic vesicles with fusion sites on the plasma membrane during regulated or polarized secretion. Involved in polarized cell growth and organ morphogenesis. During cytokinesis, involved in cell plate initiation, cell plate maturation and formation of new primary cell wall. This Arabidopsis thaliana (Mouse-ear cress) protein is Exocyst complex component SEC15A (SEC15A).